The primary structure comprises 365 residues: Aspartate-semialdehyde dehydrogenase (365 aa).

Residues Thr12, Gly13, Ser14, Val15, Ser37, Ser40, Leu85, and Asp86 each coordinate NADP(+). Cys156 functions as the Acyl-thioester intermediate in the catalytic mechanism. An NADP(+)-binding site is contributed by Gly188. Catalysis depends on His256, which acts as the Proton acceptor. Residue Asn343 participates in NADP(+) binding.

The protein belongs to the aspartate-semialdehyde dehydrogenase family. In terms of assembly, homotetramer; dimer of dimers.

It is found in the cytoplasm. The protein resides in the cytosol. Its subcellular location is the nucleus. It carries out the reaction L-aspartate 4-semialdehyde + phosphate + NADP(+) = 4-phospho-L-aspartate + NADPH + H(+). The protein operates within amino-acid biosynthesis; L-methionine biosynthesis via de novo pathway; L-homoserine from L-aspartate: step 2/3. It participates in amino-acid biosynthesis; L-threonine biosynthesis; L-threonine from L-aspartate: step 2/5. With respect to regulation, inhibited by the non-competitive inhibitors phthalaldehyde and naphthalene, the competitive inhibitor 1,4-benzoquinone and derivates such as 2-chloro-3-methoxy-1,4-naphthoquinone, 2,3-dichloro-1,4-naphthoquinone, 2-chloro-1,4-naphthoquinone, 2-bromo-1,4-naphthoquinone and 2,3-dichloro-5,8-dihydroxy-1,4-naphthoquinone, and 5-aminoisoquinoline. Inhibited by vinyl sulfones. Catalyzes the NADPH-dependent formation of L-aspartate 4-semialdehyde (L-ASA) by the reductive dephosphorylation of 4-phospho-L-aspartate. Mediates the second step in the biosynthesis of amino acids that derive from aspartate (the aspartate family of amino acids), including methioinine and threonine, the latter of which is a precursor to isoleucine. The protein is Aspartate-semialdehyde dehydrogenase of Candida albicans (strain SC5314 / ATCC MYA-2876) (Yeast).